A 220-amino-acid polypeptide reads, in one-letter code: UPF0711 protein C18orf21 (220 aa).

Residues 117 to 181 are disordered; that stretch reads SRSFVSTLKS…VSTCSSKNTS (65 aa). Residues 119–136 are compositionally biased toward polar residues; the sequence is SFVSTLKSNPATPTSKLS. At Ser-126 the chain carries Phosphoserine. Residues Thr-130 and Thr-139 each carry the phosphothreonine modification. Residues 171–180 show a composition bias toward low complexity; it reads SVSTCSSKNT.

It belongs to the UPF0711 family.

This chain is UPF0711 protein C18orf21 (C18orf21), found in Homo sapiens (Human).